The sequence spans 348 residues: uncharacterized protein (348 aa).

May be involved in apoptosis regulation. This is an uncharacterized protein from Mus musculus (Mouse).